Reading from the N-terminus, the 148-residue chain is Receptor activity-modifying protein 3 (148 aa).

A signal peptide spans 1–23 (METGALRRPQLLPLLLLLCGGCP). The Extracellular portion of the chain corresponds to 24–113 (RAGGCNETGM…CTVDRVHLED (90 aa)). Residues N29, N58, N71, and N103 are each glycosylated (N-linked (GlcNAc...) asparagine). 2 disulfides stabilise this stretch: C40–C72 and C57–C104. A helical membrane pass occupies residues 114 to 138 (PPDEVLIPLIVIPVVLTVAMAGLVV). At 139–148 (WRSKRTDTLL) the chain is on the cytoplasmic side.

The protein belongs to the RAMP family. As to quaternary structure, heterodimer of CALCRL and RAMP3; interaction induces allosteric modulation of CALCRL function and ligand specificity for adrenomedullin/ADM and intermedin/ADM2. Heterodimer of CALCR and RAMP3; interaction form the receptor complex AMYR3 for amylin/IAPP. Interacts with GPER1. As to expression, strongly expressed in lung, breast, immune system and fetal tissues.

The protein resides in the cell membrane. It localises to the membrane. Accessory protein that interacts with and modulates the function of G-protein coupled receptors including calcitonin gene-related peptide type 1 receptor (CALCRL), calcitonin receptor (CALCR) and G-protein coupled estrogen receptor 1 (GPER1). Required for the transport of CALCRL and GPER1 receptors to the plasma membrane. Plays a role in cardioprotection by reducing cardiac hypertrophy and perivascular fibrosis in a GPER1-dependent manner. Together with CALCRL, form a receptor complex for adrenomedullin/ADM and intermedin/ADM2. Together with CALCR, act as a receptor complex for amylin/IAPP. The chain is Receptor activity-modifying protein 3 from Homo sapiens (Human).